The sequence spans 236 residues: uncharacterized protein (236 aa).

Belongs to the HyuE racemase family.

The protein localises to the cytoplasm. This is an uncharacterized protein from Schizosaccharomyces pombe (strain 972 / ATCC 24843) (Fission yeast).